A 454-amino-acid polypeptide reads, in one-letter code: Pup--protein ligase (454 aa).

Mg(2+) is bound at residue Glu-9. Arg-53 contacts ATP. Residue Tyr-55 participates in Mg(2+) binding. Residue Asp-57 is the Proton acceptor of the active site. Glu-63 serves as a coordination point for Mg(2+). ATP-binding residues include Thr-66 and Trp-421.

It belongs to the Pup ligase/Pup deamidase family. Pup-conjugating enzyme subfamily.

It catalyses the reaction ATP + [prokaryotic ubiquitin-like protein]-L-glutamate + [protein]-L-lysine = ADP + phosphate + N(6)-([prokaryotic ubiquitin-like protein]-gamma-L-glutamyl)-[protein]-L-lysine.. The protein operates within protein degradation; proteasomal Pup-dependent pathway. It participates in protein modification; protein pupylation. In terms of biological role, catalyzes the covalent attachment of the prokaryotic ubiquitin-like protein modifier Pup to the proteasomal substrate proteins, thereby targeting them for proteasomal degradation. This tagging system is termed pupylation. The ligation reaction involves the side-chain carboxylate of the C-terminal glutamate of Pup and the side-chain amino group of a substrate lysine. This Frankia casuarinae (strain DSM 45818 / CECT 9043 / HFP020203 / CcI3) protein is Pup--protein ligase.